The sequence spans 348 residues: Spore wall and anchoring disk complex protein EnP1 (348 aa).

Residues 1-16 (MKLLGLLISAFGAINA) form the signal peptide. N-linked (GlcNAc...) asparagine glycosylation is found at N47, N139, and N140. The HBM1 motif lies at 193–198 (PRHGRS). Residues 248–256 (IRKGKDKKC) carry the HBM2 motif. Positions 322–327 (LKKIRG) match the HBM3 motif.

It is found in the spore wall. The protein localises to the spore. It localises to the perispore. Spore wall protein involved in the adhesion to host cells surface glycoaminoglycans (GAGs). Microsporidian spore adherence is an integral part of activation and host cell infection. This Encephalitozoon intestinalis (Microsporidian parasite) protein is Spore wall and anchoring disk complex protein EnP1 (EnP1).